Reading from the N-terminus, the 1480-residue chain is ABC transporter G family member 49 (1480 aa).

The span at Met1 to Thr18 shows a compositional bias: polar residues. Disordered stretches follow at residues Met1 to Ser42, Val60 to Glu81, and Ser104 to Ala124. 2 stretches are compositionally biased toward gly residues: residues Glu63–Gly73 and Arg107–Ala123. Positions Leu212–Glu485 constitute an ABC transporter 1 domain. Gly245–Thr252 is a binding site for ATP. One can recognise an ABC transmembrane type-2 1 domain in the interval His563 to Phe775. The next 6 membrane-spanning stretches (helical) occupy residues Phe581 to Phe601, Ser619 to Ile639, Gly656 to Leu676, Leu699 to Tyr719, Val725 to Ile745, and Val811 to Ile831. Positions Ile877–Pro1129 constitute an ABC transporter 2 domain. Residue Gly922–Thr929 coordinates ATP. Positions Glu1202–Phe1418 constitute an ABC transmembrane type-2 2 domain. The next 7 helical transmembrane spans lie at Ile1226–Ile1246, Gly1254–Ser1274, Ile1311–Tyr1331, Trp1340–Val1360, Val1368–Met1388, Trp1396–Thr1416, and Leu1449–Gly1469.

The protein belongs to the ABC transporter superfamily. ABCG family. PDR (TC 3.A.1.205) subfamily.

The protein localises to the membrane. In terms of biological role, may be a general defense protein. This Oryza sativa subsp. japonica (Rice) protein is ABC transporter G family member 49.